The sequence spans 219 residues: Ribose-5-phosphate isomerase A (219 aa).

Residues 28 to 31, 81 to 84, and 94 to 97 contribute to the substrate site; these read TGST, DGAD, and KGGG. Residue Glu103 is the Proton acceptor of the active site. Lys121 is a binding site for substrate.

The protein belongs to the ribose 5-phosphate isomerase family. As to quaternary structure, homodimer.

It carries out the reaction aldehydo-D-ribose 5-phosphate = D-ribulose 5-phosphate. It participates in carbohydrate degradation; pentose phosphate pathway; D-ribose 5-phosphate from D-ribulose 5-phosphate (non-oxidative stage): step 1/1. Its function is as follows. Catalyzes the reversible conversion of ribose-5-phosphate to ribulose 5-phosphate. This is Ribose-5-phosphate isomerase A from Shewanella sp. (strain ANA-3).